The chain runs to 196 residues: Holliday junction branch migration complex subunit RuvA (196 aa).

A domain I region spans residues 1-63 (MINKIYGKII…EDEIKLFGFL (63 aa)). A domain II region spans residues 64–138 (NVSEREVFEE…GKLVKADELT (75 aa)). Position 138 (T138) is a region of interest, flexible linker. Residues 139–196 (SSVFKFKDLEQSIVNMGFDRKLVVAAIKEIMLIDEFLMLREVEQEQFLFRETLKRLSG) form a domain III region.

Belongs to the RuvA family. In terms of assembly, homotetramer. Forms an RuvA(8)-RuvB(12)-Holliday junction (HJ) complex. HJ DNA is sandwiched between 2 RuvA tetramers; dsDNA enters through RuvA and exits via RuvB. An RuvB hexamer assembles on each DNA strand where it exits the tetramer. Each RuvB hexamer is contacted by two RuvA subunits (via domain III) on 2 adjacent RuvB subunits; this complex drives branch migration. In the full resolvosome a probable DNA-RuvA(4)-RuvB(12)-RuvC(2) complex forms which resolves the HJ.

The protein resides in the cytoplasm. Functionally, the RuvA-RuvB-RuvC complex processes Holliday junction (HJ) DNA during genetic recombination and DNA repair, while the RuvA-RuvB complex plays an important role in the rescue of blocked DNA replication forks via replication fork reversal (RFR). RuvA specifically binds to HJ cruciform DNA, conferring on it an open structure. The RuvB hexamer acts as an ATP-dependent pump, pulling dsDNA into and through the RuvAB complex. HJ branch migration allows RuvC to scan DNA until it finds its consensus sequence, where it cleaves and resolves the cruciform DNA. The polypeptide is Holliday junction branch migration complex subunit RuvA (Borrelia hermsii (strain HS1 / DAH)).